A 440-amino-acid chain; its full sequence is Glutamate--tRNA ligase 1 (440 aa).

Residues 7–17 carry the 'HIGH' region motif; sequence PSPTGYLHVGN. Residues 238–242 carry the 'KMSKS' region motif; sequence KISKR. Lys-241 contributes to the ATP binding site.

Belongs to the class-I aminoacyl-tRNA synthetase family. Glutamate--tRNA ligase type 1 subfamily. In terms of assembly, monomer.

It is found in the cytoplasm. It carries out the reaction tRNA(Glu) + L-glutamate + ATP = L-glutamyl-tRNA(Glu) + AMP + diphosphate. Catalyzes the attachment of glutamate to tRNA(Glu) in a two-step reaction: glutamate is first activated by ATP to form Glu-AMP and then transferred to the acceptor end of tRNA(Glu). This Wolbachia sp. subsp. Brugia malayi (strain TRS) protein is Glutamate--tRNA ligase 1.